Here is a 1482-residue protein sequence, read N- to C-terminus: MKPSAECCSPKFWLVLAVLAVSGSKARSQKSAPSIGIAVILVGTSDEVAIKDAHEKDDFHHLSVVPRVELVAMNETDPKSIITRICDLMSDRKIQGVVLADDTDQEAIAQILDFISAQTLTPILGIHGGSSMIMADKDESSMFFQFGPSIEQQASVMLNIMEEYDWYIFSIVTTYFPGYQDFVNKIRSTIENSFVGWELEEVLLLDMSLDDGDSKIQNQLKKLQSPIILLYCTKEEATYIFEVANSVGLTGYGYTWIVPSLVAGDTDTVPSEFPTGLISVSYDEWDYGLPARVRDGIAIITTAASDMLSEHSFIPEPKSSCYNTHEKRIYQSNMLNRYLINVTFEGRNLSFSEDGYQMHPKLVIILLNKERKWERVGKWKDKSLQMKYYVWPRMCPETEEQEDDHLSIVTLEEAPFVIVESVDPLSGTCMRNTVPCQKRIISENKTDEEPGYIKKCCKGFCIDILKKISKSVKFTYDLYLVTNGKHGKKINGTWNGMIGEVVMKRAYMAVGSLTINEERSEVVDFSVPFIETGISVMVSRSNGTVSPSAFLEPFSADVWVMMFVMLLIVSAVAVFVFEYFSPVGYNRCLADGREPGGPSFTIGKAIWLLWGLVFNNSVPVQNPKGTTSKIMVSVWAFFAVIFLASYTANLAAFMIQEEYVDQVSGLSDKKFQRPNDFSPPFRFGTVPNGSTERNIRNNYAEMHAYMGKFNQRGVDDALLSLKTGKLDAFIYDAAVLNYMAGRDEGCKLVTIGSGKVFASTGYGIAIQKDSGWKRQVDLAILQLFGDGEMEELEALWLTGICHNEKNEVMSSQLDIDNMAGVFYMLGAAMALSLITFICEHLFYWQFRHCFMGVCSGKPGMVFSISRGIYSCIHGVAIEERQSVMNSPTATMNNTHSNILRLLRTAKNMANLSGVNGSPQSALDFIRRESSVYDISEHRRSFTHSDCKSYNNPPCEENLFSDYISEVERTFGNLQLKDSNVYQDHYHHHHRPHSIGSTSSIDGLYDCDNPPFTTQPRSISKKPLDIGLPSSKHSQLSDLYGKFSFKSDRYSGHDDLIRSDVSDISTHTVTYGNIEGNAAKRRKQQYKDSLKKRPASAKSRREFDEIELAYRRRPPRSPDHKRYFRDKEGLRDFYLDQFRTKENSPHWEHVDLTDIYKERSDDFKRDSVSGGGPCTNRSHLKHGTGDKHGVVGGVPAPWEKNLTNVDWEDRSGGNFCRSCPSKLHNYSSTVAGQNSGRQACIRCEACKKAGNLYDISEDNSLQELDQPAAPVAVSSNASTTKYPQSPTNSKAQKKNRNKLRRQHSYDTFVDLQKEEAALAPRSVSLKDKGRFMDGSPYAHMFEMPAGESSFANKSSVTTAGHHHNNPGSGYMLSKSLYPDRVTQNPFIPTFGDDQCLLHGSKSYFFRQPTVAGASKTRPDFRALVTNKPVVSALHGAVPGRFQKDICIGNQSNPCVPNNKNPRAFNGSSNGHVYEKLSSIESDV.

An N-terminal signal peptide occupies residues 1–26 (MKPSAECCSPKFWLVLAVLAVSGSKA). Topologically, residues 27 to 557 (RSQKSAPSIG…SAFLEPFSAD (531 aa)) are extracellular. A glycan (N-linked (GlcNAc...) asparagine) is linked at asparagine 74. A disulfide bridge connects residues cysteine 86 and cysteine 321. The Zn(2+) site is built by histidine 127 and glutamate 284. Asparagine 341, asparagine 348, asparagine 444, and asparagine 491 each carry an N-linked (GlcNAc...) asparagine glycan. Disulfide bonds link cysteine 429-cysteine 456 and cysteine 436-cysteine 457. 2 residues coordinate L-glutamate: threonine 514 and arginine 519. Residue asparagine 542 is glycosylated (N-linked (GlcNAc...) asparagine). Residues 558 to 576 (VWVMMFVMLLIVSAVAVFV) traverse the membrane as a helical segment. The Cytoplasmic segment spans residues 577–603 (FEYFSPVGYNRCLADGREPGGPSFTIG). Residues 604–623 (KAIWLLWGLVFNNSVPVQNP) constitute an intramembrane region (discontinuously helical). The segment at 604–623 (KAIWLLWGLVFNNSVPVQNP) is pore-forming. Residues 624 to 630 (KGTTSKI) are Cytoplasmic-facing. A helical membrane pass occupies residues 631 to 646 (MVSVWAFFAVIFLASY). Residues 647–817 (TANLAAFMIQ…VMSSQLDIDN (171 aa)) are Extracellular-facing. N-linked (GlcNAc...) asparagine glycosylation is present at asparagine 688. L-glutamate is bound by residues 690–691 (ST) and aspartate 732. A disulfide bridge links cysteine 746 with cysteine 801. Residues 818 to 837 (MAGVFYMLGAAMALSLITFI) traverse the membrane as a helical segment. The Cytoplasmic portion of the chain corresponds to 838 to 1482 (CEHLFYWQFR…EKLSSIESDV (645 aa)). 4 positions are modified to phosphoserine: serine 882, serine 886, serine 917, and serine 920. Residues tyrosine 962 and tyrosine 1039 each carry the phosphotyrosine modification. Phosphoserine occurs at positions 1058, 1061, and 1064. The interval 1074–1097 (EGNAAKRRKQQYKDSLKKRPASAK) is disordered. 2 positions are modified to phosphotyrosine: tyrosine 1109 and tyrosine 1133. The residue at position 1143 (serine 1143) is a Phosphoserine. A Phosphotyrosine modification is found at tyrosine 1155. Positions 1162-1194 (FKRDSVSGGGPCTNRSHLKHGTGDKHGVVGGVP) are disordered. 2 positions are modified to phosphoserine: serine 1255 and serine 1259. A compositionally biased stretch (low complexity) spans 1266-1277 (PAAPVAVSSNAS). A disordered region spans residues 1266-1301 (PAAPVAVSSNASTTKYPQSPTNSKAQKKNRNKLRRQ). Over residues 1278–1289 (TTKYPQSPTNSK) the composition is skewed to polar residues. Basic residues predominate over residues 1290–1301 (AQKKNRNKLRRQ). Positions 1292 to 1304 (KKNRNKLRRQHSY) are interaction with DAPK1. Serine 1303 carries the post-translational modification Phosphoserine; by DAPK1. The residue at position 1472 (tyrosine 1472) is a Phosphotyrosine. The short motif at 1480–1482 (SDV) is the PDZ-binding element.

This sequence belongs to the glutamate-gated ion channel (TC 1.A.10.1) family. NR2B/GRIN2B subfamily. Heterotetramer. Forms heterotetrameric channels composed of two GluN1/zeta subunits (GRIN1), and two identical GluN2/epsilon subunits (GRIN2A, GRIN2B, GRIN2C or GRIN2D) or GluN3 subunits (GRIN3A or GRIN3B) (in vitro). Can also form heterotetrameric channels that contain at least two GluN1 subunits and at least two different GluN2 subunits (or a combination of one GluN2 and one GluN3 subunits) (in vitro). In vivo, the subunit composition may depend on the expression levels of the different subunits. Found in a complex with GRIN1, GRIN3A and PPP2CB. Interacts with MAGI3. Interacts with HIP1 and NETO1. Interacts with PDZ domains of PATJ, DLG3 and DLG4. Interacts with DAPK1. Found in a complex with GRIN1 and PRR7. Interacts with PRR7. Interacts with CAMK2A. Interacts with ARC; preventing ARC oligomerization. Interacts with TMEM25. Interacts (via the extreme C-terminus) with FRMPD2 (via the second PDZ domain); the interaction is direct and is likely to promote NMDAR-mediated neural signal transmission. GRIN2A binds FRMPD2 with lower affinity than GRIN2B. Interacts with FAM81A; the interaction facilitates condensate formation via liquid-liquid phase separation. In terms of processing, phosphorylated on tyrosine residues. Phosphorylation at Ser-1303 by DAPK1 enhances synaptic NMDA receptor channel activity. In terms of tissue distribution, detected in brain (at protein level). Detected throughout the brain, and in brain stem trigeminal nucleus. Detected in forebrain.

It is found in the cell membrane. The protein resides in the postsynaptic cell membrane. The protein localises to the cell projection. Its subcellular location is the dendrite. It localises to the late endosome. It is found in the lysosome. The protein resides in the cytoplasm. The protein localises to the cytoskeleton. The catalysed reaction is Ca(2+)(in) = Ca(2+)(out). The enzyme catalyses Na(+)(in) = Na(+)(out). It carries out the reaction K(+)(in) = K(+)(out). In terms of biological role, component of N-methyl-D-aspartate (NMDA) receptors (NMDARs) that function as heterotetrameric, ligand-gated cation channels with high calcium permeability and voltage-dependent block by Mg(2+). Participates in synaptic plasticity for learning and memory formation by contributing to the long-term depression (LTD) of hippocampus membrane currents. Channel activation requires binding of the neurotransmitter L-glutamate to the GluN2 subunit, glycine or D-serine binding to the GluN1 subunit, plus membrane depolarization to eliminate channel inhibition by Mg(2+). NMDARs mediate simultaneously the potasium efflux and the influx of calcium and sodium. Each GluN2 subunit confers differential attributes to channel properties, including activation, deactivation and desensitization kinetics, pH sensitivity, Ca2(+) permeability, and binding to allosteric modulators. In concert with DAPK1 at extrasynaptic sites, acts as a central mediator for stroke damage. Its phosphorylation at Ser-1303 by DAPK1 enhances synaptic NMDA receptor channel activity inducing injurious Ca2+ influx through them, resulting in an irreversible neuronal death. This chain is Glutamate receptor ionotropic, NMDA 2B, found in Mus musculus (Mouse).